The following is a 373-amino-acid chain: XK-related protein 9 (373 aa).

Transmembrane regions (helical) follow at residues Phe-8–Val-28, Tyr-38–Phe-58, Ala-166–Leu-186, Ile-203–Leu-223, Leu-224–Ile-244, Cys-256–Phe-276, Val-295–Pro-315, and Phe-318–Val-338.

Belongs to the XK family. Post-translationally, undergoes proteolytic processing by caspase-3 (CASP3), caspase-6 (CASP6) and caspase-7 (CASP7) to generate the XK-related protein 9, processed form, leading to its activation.

It localises to the cell membrane. It catalyses the reaction a 1,2-diacyl-sn-glycero-3-phospho-L-serine(in) = a 1,2-diacyl-sn-glycero-3-phospho-L-serine(out). Activated upon caspase cleavage to generate the XK-related protein 9, processed form. Does not act prior the onset of apoptosis. Functionally, phospholipid scramblase that promotes phosphatidylserine exposure on apoptotic cell surface. Phosphatidylserine is a specific marker only present at the surface of apoptotic cells and acts as a specific signal for engulfment. In Homo sapiens (Human), this protein is XK-related protein 9.